A 620-amino-acid polypeptide reads, in one-letter code: Kelch-like protein 8 (620 aa).

The span at 1 to 10 (MASDSMSSKQ) shows a compositional bias: polar residues. Residues 1–35 (MASDSMSSKQARNHITKGKRQQQHQQIKNRSSISD) form a disordered region. Alanine 2 carries the N-acetylalanine modification. The span at 11–22 (ARNHITKGKRQQ) shows a compositional bias: basic residues. The segment covering 23-34 (QHQQIKNRSSIS) has biased composition (polar residues). The region spanning 67-134 (CDVTLKVGSK…VYSSRLTLTV (68 aa)) is the BTB domain. The region spanning 169-270 (CLAVRAFAES…LPVDFLMGVV (102 aa)) is the BACK domain. Kelch repeat units lie at residues 319 to 366 (VLFC…SVEG), 367 to 413 (KVYA…SLGG), 415 to 460 (IYAI…ALVN), 462 to 507 (VYAV…KLHG), 508 to 554 (CLYV…TVMG), and 556 to 601 (IFAV…VCSC).

Component of the BCR(KLHL8) E3 ubiquitin ligase complex, at least composed of CUL3, KLHL8 and RBX1. Interacts with RAPSN.

It participates in protein modification; protein ubiquitination. In terms of biological role, substrate-specific adapter of a BCR (BTB-CUL3-RBX1) E3 ubiquitin ligase complex required for The BCR(KLHL8) ubiquitin ligase complex mediates ubiquitination and degradation of RAPSN. This Homo sapiens (Human) protein is Kelch-like protein 8 (KLHL8).